The primary structure comprises 159 residues: Ribosomal RNA large subunit methyltransferase H (159 aa).

Residues leucine 76, glycine 108, and 127–132 (LSKMTF) contribute to the S-adenosyl-L-methionine site.

It belongs to the RNA methyltransferase RlmH family. As to quaternary structure, homodimer.

It localises to the cytoplasm. It catalyses the reaction pseudouridine(1915) in 23S rRNA + S-adenosyl-L-methionine = N(3)-methylpseudouridine(1915) in 23S rRNA + S-adenosyl-L-homocysteine + H(+). Specifically methylates the pseudouridine at position 1915 (m3Psi1915) in 23S rRNA. The polypeptide is Ribosomal RNA large subunit methyltransferase H (Ureaplasma urealyticum serovar 10 (strain ATCC 33699 / Western)).